Reading from the N-terminus, the 364-residue chain is Phosphoserine aminotransferase (364 aa).

Arg41 contacts L-glutamate. Pyridoxal 5'-phosphate-binding positions include 75 to 76 (AS), Trp100, Thr155, and Gln198. N6-(pyridoxal phosphate)lysine is present on Lys199. 239 to 240 (NT) contributes to the pyridoxal 5'-phosphate binding site.

Belongs to the class-V pyridoxal-phosphate-dependent aminotransferase family. SerC subfamily. As to quaternary structure, homodimer. Pyridoxal 5'-phosphate serves as cofactor.

The protein localises to the cytoplasm. The catalysed reaction is O-phospho-L-serine + 2-oxoglutarate = 3-phosphooxypyruvate + L-glutamate. It catalyses the reaction 4-(phosphooxy)-L-threonine + 2-oxoglutarate = (R)-3-hydroxy-2-oxo-4-phosphooxybutanoate + L-glutamate. The protein operates within amino-acid biosynthesis; L-serine biosynthesis; L-serine from 3-phospho-D-glycerate: step 2/3. In terms of biological role, catalyzes the reversible conversion of 3-phosphohydroxypyruvate to phosphoserine and of 3-hydroxy-2-oxo-4-phosphonooxybutanoate to phosphohydroxythreonine. The polypeptide is Phosphoserine aminotransferase (Streptococcus thermophilus (strain ATCC BAA-250 / LMG 18311)).